The chain runs to 187 residues: UPF0301 protein Ppha_2142 (187 aa).

It belongs to the UPF0301 (AlgH) family.

This chain is UPF0301 protein Ppha_2142, found in Pelodictyon phaeoclathratiforme (strain DSM 5477 / BU-1).